Consider the following 256-residue polypeptide: Dihydroorotate dehydrogenase B (NAD(+)), electron transfer subunit (256 aa).

Residues 2-100 (IRLETMKVVA…MGPQGNGFDL (99 aa)) form the FAD-binding FR-type domain. FAD contacts are provided by residues 51-54 (RPIS), 68-70 (IYR), and 75-76 (GT). [2Fe-2S] cluster-binding residues include cysteine 220, cysteine 225, cysteine 228, and cysteine 243.

This sequence belongs to the PyrK family. In terms of assembly, heterotetramer of 2 PyrK and 2 PyrD type B subunits. [2Fe-2S] cluster is required as a cofactor. Requires FAD as cofactor.

It functions in the pathway pyrimidine metabolism; UMP biosynthesis via de novo pathway; orotate from (S)-dihydroorotate (NAD(+) route): step 1/1. Functionally, responsible for channeling the electrons from the oxidation of dihydroorotate from the FMN redox center in the PyrD type B subunit to the ultimate electron acceptor NAD(+). This Streptococcus pneumoniae (strain ATCC BAA-255 / R6) protein is Dihydroorotate dehydrogenase B (NAD(+)), electron transfer subunit.